The following is a 213-amino-acid chain: Adenylate kinase (213 aa).

10–15 is an ATP binding site; the sequence is GSGKGS. Positions 30-60 are NMP; sequence STGNLFRAILKEDSELARKIKEINVSGGKLV. AMP is bound by residues Thr-31, Arg-36, 58-60, 87-90, and Gln-94; these read KLV and GYPR. The interval 123-160 is LID; the sequence is GRWMCPKCAGIYNIHFKKPQVDGVCDNDQATLYQRADD. Residue Arg-124 coordinates ATP. Positions 127 and 130 each coordinate Zn(2+). 133-134 provides a ligand contact to ATP; that stretch reads IY. Positions 147 and 150 each coordinate Zn(2+). AMP is bound by residues Arg-157 and Arg-168. Position 196 (Gln-196) interacts with ATP.

Belongs to the adenylate kinase family. In terms of assembly, monomer.

The protein localises to the cytoplasm. It carries out the reaction AMP + ATP = 2 ADP. The protein operates within purine metabolism; AMP biosynthesis via salvage pathway; AMP from ADP: step 1/1. Its function is as follows. Catalyzes the reversible transfer of the terminal phosphate group between ATP and AMP. Plays an important role in cellular energy homeostasis and in adenine nucleotide metabolism. This is Adenylate kinase from Ureaplasma urealyticum serovar 10 (strain ATCC 33699 / Western).